Reading from the N-terminus, the 216-residue chain is Gamma-glutamylcyclotransferase 2-1 (216 aa).

5–10 is a binding site for substrate; it reads VFGYGS. Catalysis depends on Glu-87, which acts as the Proton acceptor.

It belongs to the gamma-glutamylcyclotransferase family. Mn(2+) serves as cofactor. Expressed in the central vascular bundle of roots, leaf veins, hydathodes, cauline leaves, shoot apex, sepal veins, flower receptacles and developing seeds.

The protein localises to the cytoplasm. It carries out the reaction an alpha-(gamma-L-glutamyl)-L-amino acid = 5-oxo-L-proline + an L-alpha-amino acid. Functionally, catalyzes the formation of 5-oxoproline from gamma-glutamyl dipeptides and plays a significant role in glutathione (GSH) homeostasis. Converts both GSH and gamma-glutamyl-L-alanine to 5-oxoproline in vitro. Plays a role in detoxification of heavy metals and metalloids by recycling glutamate and maintaining GSH homeostasis. This Arabidopsis thaliana (Mouse-ear cress) protein is Gamma-glutamylcyclotransferase 2-1.